Reading from the N-terminus, the 448-residue chain is MSTAKDPGNGVYEILSLIFDFPSNEQRLWWHSTAPMFAAMLDNAGYNIHDQYRHLGIFKKHIIPFLGVYPTKDKERWLSILTRCGLPLELSLNCTDSVVRYTYEPINEVTGTEKDPFNTLAIMASVQKLAQIQAGIDLEWFSYFKDELTLDESESATLQSNELVKEQIKTQNKLALDLKESQFALKVYFYPHLKSIATGKSTHDLIFDSVFKLSQKHDSIQPAFQVLCDYVSRRNHSAESDQHIALHARLLSCDLIDPAKSRVKIYLLEKTVSLSVMEDLWTLGGQRVDASTMDGLDMLRELWSLLKVPTGHLEYPKGYLELGEIPNEQLPSMANYTLHHNNPMPEPQVYFTVFGMNDAEISNALTIFFQRHGFDDMAKKYRVFLQDSYPYHDFESLNYLHAYISFSYRRNKPYLSVYLHTFETGRWPVVADSPISFDAYRRCDLSTK.

L-tryptophan-binding positions include 80–81 and Glu-89; that span reads IL. Substrate is bound by residues Arg-100, Lys-186, and Tyr-188. Residues Tyr-190 and Arg-249 each contribute to the L-tryptophan site. Substrate is bound by residues Arg-262, Lys-264, Tyr-266, Gln-348, Tyr-350, Tyr-414, and Tyr-418.

It belongs to the tryptophan dimethylallyltransferase family. Homodimer.

The enzyme catalyses L-tryptophan + dimethylallyl diphosphate = 4-(3-methylbut-2-enyl)-L-tryptophan + diphosphate. It participates in alkaloid biosynthesis; ergot alkaloid biosynthesis. Its function is as follows. Tryptophan dimethylallyltransferase; part of the gene cluster that mediates the biosynthesis of fungal ergot alkaloid. DmaW catalyzes the first step of ergot alkaloid biosynthesis by condensing dimethylallyl diphosphate (DMAP) and tryptophan to form 4-dimethylallyl-L-tryptophan. The second step is catalyzed by the methyltransferase easF that methylates 4-dimethylallyl-L-tryptophan in the presence of S-adenosyl-L-methionine, resulting in the formation of 4-dimethylallyl-L-abrine. The catalase easC and the FAD-dependent oxidoreductase easE then transform 4-dimethylallyl-L-abrine to chanoclavine-I which is further oxidized by easD in the presence of NAD(+), resulting in the formation of chanoclavine-I aldehyde. Agroclavine dehydrogenase easG then mediates the conversion of chanoclavine-I aldehyde to agroclavine via a non-enzymatic adduct reaction: the substrate is an iminium intermediate that is formed spontaneously from chanoclavine-I aldehyde in the presence of glutathione. The presence of easA is not required to complete this reaction. Further conversion of agroclavine to paspalic acid is a two-step process involving oxidation of agroclavine to elymoclavine and of elymoclavine to paspalic acid, the second step being performed by the elymoclavine oxidase cloA. Paspalic acid is then further converted to D-lysergic acid. Ergopeptines are assembled from D-lysergic acid and three different amino acids by the D-lysergyl-peptide-synthetases composed each of a monomudular and a trimodular nonribosomal peptide synthetase subunit. LpsB and lpsC encode the monomodular subunits responsible for D-lysergic acid activation and incorporation into the ergopeptine backbone. LpsA1 and A2 subunits encode the trimodular nonribosomal peptide synthetase assembling the tripeptide portion of ergopeptines. LpsA1 is responsible for formation of the major ergopeptine, ergotamine, and lpsA2 for alpha-ergocryptine, the minor ergopeptine of the total alkaloid mixture elaborated by C.purpurea. D-lysergyl-tripeptides are assembled by the nonribosomal peptide synthetases and released as N-(D-lysergyl-aminoacyl)-lactams. Cyclolization of the D-lysergyl-tripeptides is performed by the Fe(2+)/2-ketoglutarate-dependent dioxygenase easH which introduces a hydroxyl group into N-(D-lysergyl-aminoacyl)-lactam at alpha-C of the aminoacyl residue followed by spontaneous condensation with the terminal lactam carbonyl group. The polypeptide is Tryptophan dimethylallyltransferase 1 (Claviceps purpurea (strain 20.1) (Ergot fungus)).